We begin with the raw amino-acid sequence, 111 residues long: Universal stress protein B (111 aa).

A run of 2 helical transmembrane segments spans residues 1–21 and 90–110; these read MIST…NMAR and FILT…LMIW.

Belongs to the universal stress protein B family.

It localises to the cell inner membrane. The protein is Universal stress protein B of Klebsiella pneumoniae (strain 342).